The primary structure comprises 329 residues: Prostaglandin reductase 1 (329 aa).

Thr18 is modified (phosphothreonine). Ser20 bears the Phosphoserine mark. NADP(+)-binding positions include 152 to 155 (GAVG), Lys178, Tyr193, Asn217, 239 to 245 (CGAISVY), 270 to 272 (FIV), and Asn321. Lys178 is modified (N6-(2-hydroxyisobutyryl)lysine; alternate). Position 178 is an N6-acetyllysine; alternate (Lys178).

It belongs to the NADP-dependent oxidoreductase L4BD family. Monomer or homodimer. As to expression, detected in small intestine, kidney, liver, spleen and stomach (at protein level). Detected in small intestine, kidney and liver.

The protein resides in the cytoplasm. The catalysed reaction is 13,14-dihydro-15-oxo-prostaglandin E1 + NADP(+) = 15-oxoprostaglandin E1 + NADPH + H(+). The enzyme catalyses 13,14-dihydro-15-oxo-prostaglandin E2 + NAD(+) = 15-oxoprostaglandin E2 + NADH + H(+). It catalyses the reaction 13,14-dihydro-15-oxo-prostaglandin F1alpha + NADP(+) = 15-oxoprostaglandin F1alpha + NADPH + H(+). It carries out the reaction 13,14-dihydro-15-oxo-PGF2alpha + NADP(+) = 15-oxoprostaglandin F2alpha + NADPH + H(+). The catalysed reaction is leukotriene B4 + NADP(+) = 12-oxo-leukotriene B4 + NADPH + H(+). The enzyme catalyses 20-hydroxy-leukotriene B4 + NADP(+) = 12-oxo-20-hydroxy-leukotriene B4 + NADPH + H(+). It catalyses the reaction 6-trans-leukotriene B4 + NADP(+) = 12-oxo-(5S)-hydroxy-(6E,8E,10E,14Z)-eicosatetraenoate + NADPH + H(+). It carries out the reaction (5S,12S)-dihydroxy-(6E,10E,12E,14Z)-eicosatetraenoate + NADP(+) = 12-oxo-(5S)-hydroxy-(6E,8E,10E,14Z)-eicosatetraenoate + NADPH + H(+). The catalysed reaction is an n-alkanal + NADP(+) = an alk-2-enal + NADPH + H(+). The enzyme catalyses hexanal + NADP(+) = (E)-hex-2-enal + NADPH + H(+). It catalyses the reaction octanal + NADP(+) = (2E)-octenal + NADPH + H(+). It carries out the reaction decanal + NADP(+) = (2E)-decenal + NADPH + H(+). The catalysed reaction is dodecanal + NADP(+) = (2E)-dodecenal + NADPH + H(+). The enzyme catalyses 4-hydroxynonanal + NADP(+) = (E)-4-hydroxynon-2-enal + NADPH + H(+). It catalyses the reaction pentan-2-one + NADP(+) = (E)-pent-3-en-2-one + NADPH + H(+). It carries out the reaction nonan-2-one + NADP(+) = (3E)-nonen-2-one + NADPH + H(+). Functionally, NAD(P)H-dependent oxidoreductase involved in metabolic inactivation of pro- and anti-inflammatory eicosanoids: prostaglandins (PG), leukotrienes (LT) and lipoxins (LX). Catalyzes with high efficiency the reduction of the 13,14 double bond of 15-oxoPGs, including 15-oxo-PGE1, 15-oxo-PGE2, 15-oxo-PGF1-alpha and 15-oxo-PGF2-alpha. Catalyzes with lower efficiency the oxidation of the hydroxyl group at C12 of LTB4 and its derivatives, converting them into biologically less active 12-oxo-LTB4 metabolites. Reduces 15-oxo-LXA4 to 13,14 dihydro-15-oxo-LXA4, enhancing neutrophil recruitment at the inflammatory site. Plays a role in metabolic detoxification of alkenals and ketones. Reduces alpha,beta-unsaturated alkenals and ketones, particularly those with medium-chain length, showing highest affinity toward (2E)-decenal and (3E)-3-nonen-2-one. May inactivate 4-hydroxy-2-nonenal, a cytotoxic lipid constituent of oxidized low-density lipoprotein particles. The sequence is that of Prostaglandin reductase 1 (Ptgr1) from Cavia porcellus (Guinea pig).